A 78-amino-acid polypeptide reads, in one-letter code: Large ribosomal subunit protein bL28 (78 aa).

It belongs to the bacterial ribosomal protein bL28 family.

This chain is Large ribosomal subunit protein bL28, found in Synechococcus sp. (strain WH7803).